Here is a 782-residue protein sequence, read N- to C-terminus: General transcription and DNA repair factor IIH helicase/translocase subunit XPB (782 aa).

Over residues 1–11 (MGKRDRADRDK) the composition is skewed to basic and acidic residues. Disordered regions lie at residues 1–51 (MGKR…ESGT) and 218–241 (SAISKTAESSGGPSTSRVTDPQGK). The short motif at 6-18 (RADRDKKKSRKRH) is the Nuclear localization signal element. A compositionally biased stretch (acidic residues) spans 21 to 30 (DEEDDEEDAP). Positions 218-236 (SAISKTAESSGGPSTSRVT) are enriched in polar residues. The Helicase ATP-binding domain occupies 327 to 488 (MFGNGRARSG…DLNFLIGPKL (162 aa)). 340-347 (LPCGAGKS) provides a ligand contact to ATP. Residues 441–444 (DEVH) carry the DEVH box motif. The 161-residue stretch at 542-702 (RACQFLIKFH…LAGMEEEDLA (161 aa)) folds into the Helicase C-terminal domain. Residues Arg-642 and Arg-645 each contribute to the ATP site. Ser-686 bears the Phosphoserine mark. Ser-751 is modified (phosphoserine; by CK2).

It belongs to the helicase family. RAD25/XPB subfamily. In terms of assembly, component of the 7-subunit TFIIH core complex composed of XPB/ERCC3, XPD/ERCC2, GTF2H1, GTF2H2, GTF2H3, GTF2H4 and GTF2H5, which is active in NER. The core complex associates with the 3-subunit CDK-activating kinase (CAK) module composed of CCNH/cyclin H, CDK7 and MNAT1 to form the 10-subunit holoenzyme (holo-TFIIH) active in transcription. Interacts with PUF60. Interacts with ATF7IP. Interacts with KAT2A; leading to KAT2A recruitment to promoters and acetylation of histones. Part of TBP-based Pol II pre-initiation complex (PIC), in which Pol II core assembles with general transcription factors and other specific initiation factors including GTF2E1, GTF2E2, GTF2F1, GTF2F2, TCEA1, ERCC2, ERCC3, GTF2H2, GTF2H3, GTF2H4, GTF2H5, GTF2A1, GTF2A2, GTF2B and TBP; this large multi-subunit PIC complex mediates DNA unwinding and targets Pol II core to the transcription start site where the first phosphodiester bond forms. As to quaternary structure, (Microbial infection) Interacts with Epstein-Barr virus EBNA2. Phosphorylation on Ser-751 by CK2 controls the 5'-excision activity of ERCC1-XPF endonuclease; phosphorylated protein inhibits the excision activity and thus NER. Dephosphorylation reactivates the 5'-excision step. Phosphorylation has no effect on transcription or the 3'-5' helicase activity.

The protein localises to the nucleus. The enzyme catalyses Couples ATP hydrolysis with the unwinding of duplex DNA by translocating in the 3'-5' direction.. It catalyses the reaction ATP + H2O = ADP + phosphate + H(+). Its activity is regulated as follows. Phosphorylation on Ser-751 by CK2 controls the 5'-excision activity of ERCC1-XPF endonuclease; phosphorylated protein inhibits the excision activity and thus NER. ATPase activity is stimulated by TFIIH subunit p52 (GTF2H4). DNA translocase activity by this subunit in TFIIH is stimulated by XPA, ERCC5/XPG and XFP plus ERCC1; translocase activity is sensitive to triptolide which targets this enzyme. In terms of biological role, ATP-dependent 3'-5' DNA helicase/translocase. Binds dsDNA rather than ssDNA, unzipping it in a translocase rather than classical helicase activity. Component of the general transcription and DNA repair factor IIH (TFIIH) core complex. When complexed to CDK-activating kinase (CAK), involved in RNA transcription by RNA polymerase II. The ATPase activity of XPB/ERCC3, but not its helicase activity, is required for DNA opening; it may wrap around the damaged DNA wedging it open, causing localized melting that allows XPD/ERCC2 helicase to anchor. In transcription, TFIIH has an essential role in transcription initiation. When the pre-initiation complex (PIC) has been established, TFIIH is required for promoter opening and promoter escape. The ATP-dependent helicase activity of XPB/ERCC3 is required for promoter opening and promoter escape. In transcription pre-initiation complexes induces and propagates a DNA twist to open DNA. Also involved in transcription-coupled nucleotide excision repair (NER) of damaged DNA. In NER, TFIIH acts by opening DNA around the lesion to allow the excision of the damaged oligonucleotide and its replacement by a new DNA fragment. The structure of the TFIIH transcription complex differs from the NER-TFIIH complex; large movements by XPD/ERCC2 and XPB/ERCC3 are stabilized by XPA. XPA retains XPB/ERCC3 at the 5' end of a DNA bubble (mimicking DNA damage). This chain is General transcription and DNA repair factor IIH helicase/translocase subunit XPB, found in Homo sapiens (Human).